A 66-amino-acid polypeptide reads, in one-letter code: Large ribosomal subunit protein bL35 (66 aa).

The segment covering 1–14 (MPKMKTKSAAKKRF) has biased composition (basic residues). The disordered stretch occupies residues 1-34 (MPKMKTKSAAKKRFSMTATGKVKAGPAGKRHGMI).

It belongs to the bacterial ribosomal protein bL35 family.

This is Large ribosomal subunit protein bL35 from Paracoccus denitrificans (strain Pd 1222).